Consider the following 565-residue polypeptide: Bifunctional dihydrofolate reductase-thymidylate synthase 2 (565 aa).

The region spanning 65-242 (TYQVVVAATK…LRFSFTTHVR (178 aa)) is the DHFR domain. A substrate-binding site is contributed by Val69. NADP(+) contacts are provided by residues Ala71 and 77–83 (GIGKDGK). Asp91 is a binding site for substrate. NADP(+)-binding positions include 115 to 117 (RKT) and 136 to 139 (LSRS). Position 178 (Ile178) interacts with substrate. Position 179-186 (179-186 (GGGDILRE)) interacts with NADP(+). A substrate-binding site is contributed by Thr199. The interval 245–280 (SSSAGEASDESDGSKVLQVDWKKFSSVLPKMIFDRH) is hinge. The interval 281–565 (EEYLYLNLVK…HKKIDMKMAV (285 aa)) is thymidylate synthase. Residue Arg302 coordinates dUMP. The active site involves Cys447. Residues His448, 466 to 470 (QRSAD), Asn478, and 508 to 510 (HVY) each bind dUMP.

The protein in the N-terminal section; belongs to the dihydrofolate reductase family. It in the C-terminal section; belongs to the thymidylate synthase family. In terms of assembly, heterodimer or homodimer.

The catalysed reaction is (6S)-5,6,7,8-tetrahydrofolate + NADP(+) = 7,8-dihydrofolate + NADPH + H(+). It catalyses the reaction dUMP + (6R)-5,10-methylene-5,6,7,8-tetrahydrofolate = 7,8-dihydrofolate + dTMP. Its pathway is cofactor biosynthesis; tetrahydrofolate biosynthesis; 5,6,7,8-tetrahydrofolate from 7,8-dihydrofolate: step 1/1. Its function is as follows. Bifunctional enzyme. Involved in de novo dTMP biosynthesis. Key enzyme in folate metabolism. Can play two different roles depending on the source of dihydrofolate: de novo synthesis of tetrahydrofolate or recycling of the dihydrofolate released as one of the end products of the TS catalyzed reaction. Catalyzes an essential reaction for de novo glycine and purine synthesis, DNA precursor synthesis, and for the conversion of dUMP to dTMP. This is Bifunctional dihydrofolate reductase-thymidylate synthase 2 (THY-2) from Arabidopsis thaliana (Mouse-ear cress).